The chain runs to 451 residues: Phosphoglucosamine mutase (451 aa).

The active-site Phosphoserine intermediate is serine 102. Mg(2+) contacts are provided by serine 102, aspartate 243, aspartate 245, and aspartate 247. Serine 102 bears the Phosphoserine mark.

This sequence belongs to the phosphohexose mutase family. Mg(2+) is required as a cofactor. Activated by phosphorylation.

It carries out the reaction alpha-D-glucosamine 1-phosphate = D-glucosamine 6-phosphate. In terms of biological role, catalyzes the conversion of glucosamine-6-phosphate to glucosamine-1-phosphate. The polypeptide is Phosphoglucosamine mutase (Brucella anthropi (strain ATCC 49188 / DSM 6882 / CCUG 24695 / JCM 21032 / LMG 3331 / NBRC 15819 / NCTC 12168 / Alc 37) (Ochrobactrum anthropi)).